The sequence spans 287 residues: MSTINLPLNLTVRVHPVVLFQIVDAYERRNADSERVIGTLLGSVDKGVVEVTNCFCLPHKEHTDQVEAELGYASDLYELNQRVNASENIVGWWATGQEVTNHSSVIHEYYARECTNPVHLTLDTSLTGARMGIKAYVCVSLGVPGGKSGCMFTPINVEVTSYEPEIVGLQLCMKTIGVQSNPSRPRTVSPMLDLAQVTDASDKLLALLSDVLAYVEDVLSEKQQPENTVGRALLDLIHSVPNMTGDQFAQMFNSNVKDLLMVVTLSQLIKTQLQLNEKLTSLTSFLN.

The MPN domain occupies valine 12 to glycine 142.

Belongs to the eIF-3 subunit F family. In terms of assembly, component of the eukaryotic translation initiation factor 3 (eIF-3) complex.

The protein localises to the cytoplasm. Component of the eukaryotic translation initiation factor 3 (eIF-3) complex, which is involved in protein synthesis of a specialized repertoire of mRNAs and, together with other initiation factors, stimulates binding of mRNA and methionyl-tRNAi to the 40S ribosome. The eIF-3 complex specifically targets and initiates translation of a subset of mRNAs involved in cell proliferation. In Anopheles gambiae (African malaria mosquito), this protein is Eukaryotic translation initiation factor 3 subunit F.